Reading from the N-terminus, the 221-residue chain is Flagellar L-ring protein 2 (221 aa).

Positions 1–16 (MKRFLILTPMVLALCG) are cleaved as a signal peptide. The N-palmitoyl cysteine moiety is linked to residue cysteine 17. Cysteine 17 carries the S-diacylglycerol cysteine lipid modification.

The protein belongs to the FlgH family. The basal body constitutes a major portion of the flagellar organelle and consists of four rings (L,P,S, and M) mounted on a central rod.

Its subcellular location is the cell outer membrane. The protein localises to the bacterial flagellum basal body. Functionally, assembles around the rod to form the L-ring and probably protects the motor/basal body from shearing forces during rotation. The polypeptide is Flagellar L-ring protein 2 (Yersinia pseudotuberculosis serotype I (strain IP32953)).